Here is a 236-residue protein sequence, read N- to C-terminus: Uridylate kinase (236 aa).

10-13 (KLSG) contributes to the ATP binding site. Positions 18-23 (GEDGYG) are involved in allosteric activation by GTP. Position 52 (glycine 52) interacts with UMP. ATP is bound by residues glycine 53 and arginine 57. Residues aspartate 72 and 133-140 (TGNPYFTT) each bind UMP. Positions 160, 166, and 169 each coordinate ATP.

Belongs to the UMP kinase family. Homohexamer.

The protein resides in the cytoplasm. It catalyses the reaction UMP + ATP = UDP + ADP. It functions in the pathway pyrimidine metabolism; CTP biosynthesis via de novo pathway; UDP from UMP (UMPK route): step 1/1. Allosterically activated by GTP. Inhibited by UTP. Its function is as follows. Catalyzes the reversible phosphorylation of UMP to UDP. This chain is Uridylate kinase, found in Chlorobium phaeobacteroides (strain DSM 266 / SMG 266 / 2430).